Consider the following 100-residue polypeptide: NAD(P)H-quinone oxidoreductase subunit 4L, chloroplastic (100 aa).

3 consecutive transmembrane segments (helical) span residues 1 to 21, 29 to 49, and 63 to 83; these read MFGH…YGLI, ALMC…TFPN, and VFVI…VLAI.

The protein belongs to the complex I subunit 4L family. As to quaternary structure, NDH is composed of at least 16 different subunits, 5 of which are encoded in the nucleus.

It is found in the plastid. The protein localises to the chloroplast thylakoid membrane. It carries out the reaction a plastoquinone + NADH + (n+1) H(+)(in) = a plastoquinol + NAD(+) + n H(+)(out). The catalysed reaction is a plastoquinone + NADPH + (n+1) H(+)(in) = a plastoquinol + NADP(+) + n H(+)(out). Its function is as follows. NDH shuttles electrons from NAD(P)H:plastoquinone, via FMN and iron-sulfur (Fe-S) centers, to quinones in the photosynthetic chain and possibly in a chloroplast respiratory chain. The immediate electron acceptor for the enzyme in this species is believed to be plastoquinone. Couples the redox reaction to proton translocation, and thus conserves the redox energy in a proton gradient. The sequence is that of NAD(P)H-quinone oxidoreductase subunit 4L, chloroplastic from Huperzia lucidula (Shining clubmoss).